Reading from the N-terminus, the 139-residue chain is uncharacterized protein (139 aa).

The next 2 helical transmembrane spans lie at 35 to 55 and 119 to 139; these read AYFK…AAAA and CCLF…VFCV.

It is found in the membrane. This is an uncharacterized protein from Saccharomyces cerevisiae (strain ATCC 204508 / S288c) (Baker's yeast).